Here is a 362-residue protein sequence, read N- to C-terminus: Putative sphingolipid delta(4)-desaturase/C4-monooxygenase (362 aa).

Transmembrane regions (helical) follow at residues 45–61 (YVVS…CWLL), 71–91 (LEAY…IHDI), and 107–127 (FFGM…FKKY). The Histidine box-1 signature appears at 89 to 93 (HDISH). Positions 128–132 (HVEHH) match the Histidine box-2 motif. A run of 2 helical transmembrane segments spans residues 160–177 (LLWL…PLII) and 198–218 (LLIL…GTII). Positions 259-263 (HVEHH) match the Histidine box-3 motif.

The protein belongs to the fatty acid desaturase type 1 family. DEGS subfamily.

It localises to the membrane. The catalysed reaction is an N-acyl-15-methylhexadecasphinganine + 2 Fe(II)-[cytochrome b5] + O2 + 2 H(+) = an N-acyl-4-hydroxy-15-methylhexadecasphinganine + 2 Fe(III)-[cytochrome b5] + H2O. The enzyme catalyses an N-acyl-15-methylhexadecasphinganine + 2 Fe(II)-[cytochrome b5] + O2 + 2 H(+) = an N-acyl-15-methylhexadecasphing-4-enine + 2 Fe(III)-[cytochrome b5] + 2 H2O. It catalyses the reaction a dihydroceramide + 2 Fe(II)-[cytochrome b5] + O2 + 2 H(+) = a phytoceramide + 2 Fe(III)-[cytochrome b5] + H2O. It carries out the reaction an N-acylsphinganine + 2 Fe(II)-[cytochrome b5] + O2 + 2 H(+) = an N-acylsphing-4-enine + 2 Fe(III)-[cytochrome b5] + 2 H2O. The catalysed reaction is N-octanoylsphinganine + 2 Fe(II)-[cytochrome b5] + O2 + 2 H(+) = N-octanoyl-4-hydroxysphinganine + 2 Fe(III)-[cytochrome b5] + H2O. The enzyme catalyses an N-acylsphinganine + 2 Fe(II)-[cytochrome b5] + O2 + 2 H(+) = an N-acyl-(4R)-4-hydroxysphinganine + 2 Fe(III)-[cytochrome b5] + H2O. The protein operates within lipid metabolism; sphingolipid metabolism. Its function is as follows. Bifunctional enzyme which acts both as a sphingolipid delta(4)-desaturase and a sphingolipid C4-monooxygenase. C.elegans contain specific sphingoid bases, which are unique or different in structure compared to the sphingoid bases found in other animals. Two examples of these distinctive compounds are: 15-methylhexadecasphinganine and 15-methylhexadecasphing-4-enine and this enzyme can catalyze their conversion. The chain is Putative sphingolipid delta(4)-desaturase/C4-monooxygenase (ttm-5) from Caenorhabditis elegans.